The sequence spans 679 residues: UvrABC system protein B (679 aa).

Residues 25–190 enclose the Helicase ATP-binding domain; the sequence is EGVNQGQRYQ…SRNDFDITRG (166 aa). ATP is bound at residue 38-45; it reads GATGTGKT. Residues 91-114 carry the Beta-hairpin motif; the sequence is YYDYYQPEAYVPVSDTYIAKTASI. Positions 429–591 constitute a Helicase C-terminal domain; that stretch reads QVDDLLAEIR…IVPRPAGKRA (163 aa). One can recognise a UVR domain in the interval 639–674; sequence PELIDQLETKMKEAAKNLNFEEAASLRDRIKKFRQK.

The protein belongs to the UvrB family. In terms of assembly, forms a heterotetramer with UvrA during the search for lesions. Interacts with UvrC in an incision complex.

Its subcellular location is the cytoplasm. In terms of biological role, the UvrABC repair system catalyzes the recognition and processing of DNA lesions. A damage recognition complex composed of 2 UvrA and 2 UvrB subunits scans DNA for abnormalities. Upon binding of the UvrA(2)B(2) complex to a putative damaged site, the DNA wraps around one UvrB monomer. DNA wrap is dependent on ATP binding by UvrB and probably causes local melting of the DNA helix, facilitating insertion of UvrB beta-hairpin between the DNA strands. Then UvrB probes one DNA strand for the presence of a lesion. If a lesion is found the UvrA subunits dissociate and the UvrB-DNA preincision complex is formed. This complex is subsequently bound by UvrC and the second UvrB is released. If no lesion is found, the DNA wraps around the other UvrB subunit that will check the other stand for damage. The polypeptide is UvrABC system protein B (Prochlorococcus marinus (strain MIT 9303)).